The chain runs to 573 residues: Urease subunit alpha 2 (573 aa).

Residues 136–573 (GAIDAHVHLI…LPMAQRYFLF (438 aa)) enclose the Urease domain. Positions 141, 143, and 224 each coordinate Ni(2+). An N6-carboxylysine modification is found at Lys224. His226 lines the substrate pocket. 2 residues coordinate Ni(2+): His253 and His279. His327 functions as the Proton donor in the catalytic mechanism. Asp367 is a Ni(2+) binding site.

It belongs to the metallo-dependent hydrolases superfamily. Urease alpha subunit family. In terms of assembly, may form a heterohexamer of 3 UreC (alpha) and 3 UreAB (gamma/beta) subunits. May also form a heterotrimer of UreA (gamma), UreB (beta) and UreC (alpha) subunits. Three heterotrimers associate to form the active enzyme. Ni cation is required as a cofactor. In terms of processing, carboxylation allows a single lysine to coordinate two nickel ions.

The protein resides in the cytoplasm. It carries out the reaction urea + 2 H2O + H(+) = hydrogencarbonate + 2 NH4(+). It functions in the pathway nitrogen metabolism; urea degradation; CO(2) and NH(3) from urea (urease route): step 1/1. This Streptomyces avermitilis (strain ATCC 31267 / DSM 46492 / JCM 5070 / NBRC 14893 / NCIMB 12804 / NRRL 8165 / MA-4680) protein is Urease subunit alpha 2.